Consider the following 273-residue polypeptide: Large ribosomal subunit protein uL2 (273 aa).

Disordered stretches follow at residues 35–54 (DSKS…TRHI) and 222–273 (GMAM…RRNK). Residues 39–49 (KSGGRNNNGRI) show a composition bias toward polar residues. Positions 229-239 (DHPHGGGEGRN) are enriched in basic and acidic residues. Residues 253 to 273 (KGFKTRKNKRTDKYIVRRRNK) are compositionally biased toward basic residues.

It belongs to the universal ribosomal protein uL2 family. Part of the 50S ribosomal subunit. Forms a bridge to the 30S subunit in the 70S ribosome.

One of the primary rRNA binding proteins. Required for association of the 30S and 50S subunits to form the 70S ribosome, for tRNA binding and peptide bond formation. It has been suggested to have peptidyltransferase activity; this is somewhat controversial. Makes several contacts with the 16S rRNA in the 70S ribosome. The sequence is that of Large ribosomal subunit protein uL2 from Aeromonas salmonicida (strain A449).